Here is a 229-residue protein sequence, read N- to C-terminus: Growth factor receptor-bound protein 2-A (229 aa).

Positions 1–58 (MEAIAKYDFKATADDELSFKRGDVLKVLNEECDQNWYKAELNGKDGFIPKNYIEMKAH) constitute an SH3 1 domain. In terms of domain architecture, SH2 spans 60–152 (WFFGKIPRAK…NQQIFLRDIE (93 aa)). Residues 168-227 (QQPTYVQALFDFDPQEDGELGFRRGDFIQVVDNSDPNWWKGTCLSQTGMFPRNYVTPVNR) form the SH3 2 domain.

The protein belongs to the GRB2/sem-5/DRK family.

The protein localises to the nucleus. The protein resides in the cytoplasm. Its subcellular location is the endosome. It localises to the golgi apparatus. Functionally, adapter protein that provides a critical link between cell surface growth factor receptors and the Ras signaling pathway. Promotes meiotic reinitiation during oocyte maturation. The chain is Growth factor receptor-bound protein 2-A (grb2-a) from Xenopus laevis (African clawed frog).